The following is a 214-amino-acid chain: Scytalone dehydratase-like protein mdpB (214 aa).

Residues tyrosine 40 and tyrosine 60 each contribute to the substrate site. Residues histidine 95 and histidine 120 contribute to the active site.

This sequence belongs to the scytalone dehydratase family.

Its pathway is secondary metabolite biosynthesis. In terms of biological role, scytalone dehydratase-like protein; part of the gene cluster that mediates the biosynthesis of monodictyphenone, a prenyl xanthone derivative. The pathway begins with the synthesis of atrochrysone thioester by the polyketide synthase (PKS) mdpG. The atrochrysone carboxyl ACP thioesterase mdpF then breaks the thioester bond and releases the atrochrysone carboxylic acid from mdpG. The atrochrysone carboxylic acid is then converted to atrochrysone which is further transformed into emodin anthrone. The next step is performed by the anthrone oxygenase mdpH that catalyzes the oxidation of emodinanthrone to emodin. Emodin is further modified to yield monodictyphenone via several steps involving mdpB, mdpC mdpJ, mdpK and mdpL. These enzymes with xptA, xptB and xptC are also proposed to be involved in the synthesis of shamixanthone from emodin. Especially, direct reduction of emodin by the short chain dehydrogenase mdpC followed by dehydration catalyzed by the scytalone dehydratase-like protein mdpB gives loss of oxygen and formation of chrysophanol intermediate in two simple steps. This chain is Scytalone dehydratase-like protein mdpB, found in Emericella nidulans (strain FGSC A4 / ATCC 38163 / CBS 112.46 / NRRL 194 / M139) (Aspergillus nidulans).